The sequence spans 768 residues: DNA replication licensing factor MCM3 homolog 1 (768 aa).

The MCM domain occupies 290–497 (TFDLLGNSLA…IDRQISEHVA (208 aa)). Residue 340–347 (GDPSVAKS) coordinates ATP. The Arginine finger signature appears at 472–475 (SRFD). Residues 662–687 (MKQQAEHDAGATGGTVDGHGSSGNDP) are disordered. The span at 672-682 (ATGGTVDGHGS) shows a compositional bias: gly residues.

The protein belongs to the MCM family.

It localises to the nucleus. The catalysed reaction is ATP + H2O = ADP + phosphate + H(+). Functionally, acts as a factor that allows the DNA to undergo a single round of replication per cell cycle. Required for DNA replication and cell proliferation. May act as a component of the MCM complex which is the putative replicative helicase of the replication licensing system in eukaryotic cells. This is DNA replication licensing factor MCM3 homolog 1 (ROA1) from Zea mays (Maize).